The following is a 645-amino-acid chain: MARDIQLPCDGDGVCMRCKSNPPPEESLTCGTCVTPWHVSCLSSPPKTLASTLQWHCPDCSGEIDPLPVSGGATGFESAGSDLVAAIRAIEADESLSTEEKAKMRQRLLSGKGVEEDDEEEKRKKKGKGKNPNLDVLSALGDNLMCSFCMQLPERPVTKPCGHNACLKCFEKWMGQGKRTCGKCRSIIPEKMAKNPRINSSLVAAIRLAKVSKSAAATTSKVFHFISNQDRPDKAFTTERAKKTGKANAASGKIYVTIPPDHFGPIPAENDPVRNQGLLVGESWEDRLECRQWGAHFPHVAGIAGQSTYGAQSVALSGGYKDDEDHGEWFLYTGSGGRDLSGNKRTNKEQSFDQKFEKSNAALKLSCKLGYPVRVVRSHKEKRSAYAPEEGVRYDGVYRIEKCWRKVGVQGSFKVCRYLFVRCDNEPAPWTSDENGDRPRPIPNIPELNMATDLFERKETPSWDFDEGEGCWKWMKPPPASKKSVNVLAPEERKNLRKAIKAAHSNTMRARLLKEFKCQICQQVLTLPVTTPCAHNFCKACLEAKFAGKTLVRERSTGGRTLRSRKNVLNCPCCPTDISDFLQNPQVNREVAEVIEKLKTQEEDTAELEDEDEGECSGTTPEEDSEQPKKRIKLDTDATVSATIR.

The segment at 12 to 63 (DGVCMRCKSNPPPEESLTCGTCVTPWHVSCLSSPPKTLASTLQWHCPDCSGE) adopts a PHD-type zinc-finger fold. Residues 96 to 133 (LSTEEKAKMRQRLLSGKGVEEDDEEEKRKKKGKGKNPN) are disordered. An RING-type 1 zinc finger spans residues 146-185 (CSFCMQLPERPVTKPCGHNACLKCFEKWMGQGKRTCGKCR). The region spanning 273-422 (VRNQGLLVGE…FKVCRYLFVR (150 aa)) is the YDG domain. The RING-type 2 zinc finger occupies 518-575 (CQICQQVLTLPVTTPCAHNFCKACLEAKFAGKTLVRERSTGGRTLRSRKNVLNCPCCP). The stretch at 583–613 (QNPQVNREVAEVIEKLKTQEEDTAELEDEDE) forms a coiled coil. The interval 599-645 (KTQEEDTAELEDEDEGECSGTTPEEDSEQPKKRIKLDTDATVSATIR) is disordered. Positions 603 to 625 (EDTAELEDEDEGECSGTTPEEDS) are enriched in acidic residues. Residues 626 to 636 (EQPKKRIKLDT) show a composition bias toward basic and acidic residues.

As to quaternary structure, interacts with histones CENH3, HTB2, HTR3 and H4. Mostly expressed in inflorescence and, to a lower extent, in leaves.

The protein localises to the nucleus. It carries out the reaction S-ubiquitinyl-[E2 ubiquitin-conjugating enzyme]-L-cysteine + [acceptor protein]-L-lysine = [E2 ubiquitin-conjugating enzyme]-L-cysteine + N(6)-ubiquitinyl-[acceptor protein]-L-lysine.. Its pathway is protein modification; protein ubiquitination. Functionally, E3 ubiquitin-protein ligase. Participates in CpG methylation-dependent transcriptional regulation and epigenetic transcriptional silencing. Mediates ubiquitination with the E2 ubiquitin-conjugating enzyme UBC11. Promotes methylation-mediated gene silencing leading, for example, to early flowering. Associates with methylated DNA, and can bind to CpG, CpNpG, and CpNpN DNA motifs, with a strong preference for methylated forms, and with highest affinity for CpG substrate. Probably acts at the DNA methylation?histone interface to maintain centromeric heterochromatin. The sequence is that of E3 ubiquitin-protein ligase ORTHRUS 2 (ORTH2) from Arabidopsis thaliana (Mouse-ear cress).